Consider the following 196-residue polypeptide: Molybdopterin synthase catalytic subunit (196 aa).

Substrate-binding positions include 110–111, K126, and 133–135; these read HR and KKE. The tract at residues 142–196 is disordered; that stretch reads GGIWRANRDGAVGERVDEDEEKKKPDMGPHGPILRPSRPGERGHGPVVRNHQLGS. The segment covering 147-168 has biased composition (basic and acidic residues); that stretch reads ANRDGAVGERVDEDEEKKKPDM.

This sequence belongs to the MoaE family. MOCS2B subfamily. In terms of assembly, heterotetramer; composed of 2 small (MOCS2A) and 2 large (MOCS2B) subunits.

It localises to the cytoplasm. The catalysed reaction is 2 [molybdopterin-synthase sulfur-carrier protein]-C-terminal-Gly-aminoethanethioate + cyclic pyranopterin phosphate + H2O = molybdopterin + 2 [molybdopterin-synthase sulfur-carrier protein]-C-terminal Gly-Gly + 2 H(+). The protein operates within cofactor biosynthesis; molybdopterin biosynthesis. Functionally, catalytic subunit of the molybdopterin synthase complex, a complex that catalyzes the conversion of precursor Z into molybdopterin. Acts by mediating the incorporation of 2 sulfur atoms from thiocarboxylated MOCS2A into precursor Z to generate a dithiolene group. This chain is Molybdopterin synthase catalytic subunit, found in Sclerotinia sclerotiorum (strain ATCC 18683 / 1980 / Ss-1) (White mold).